The chain runs to 605 residues: Methyl-CpG-binding domain protein 1 (605 aa).

The region spanning M1–L69 is the MBD domain. The interval A80–A123 is disordered. The span at S83–Q99 shows a compositional bias: basic residues. A Nuclear localization signal motif is present at residues K84 to K88. Residues E106–T120 show a composition bias toward basic and acidic residues. Residue K117 forms a Glycyl lysine isopeptide (Lys-Gly) (interchain with G-Cter in SUMO2) linkage. 2 consecutive CXXC-type zinc fingers follow at residues R169–L216 and R217–L263. 16 residues coordinate Zn(2+): C176, C179, C182, C188, C191, C194, C210, C215, C225, C228, C231, C237, C240, C243, C257, and C262. The interval R269–L308 is disordered. A Glycyl lysine isopeptide (Lys-Gly) (interchain with G-Cter in SUMO2) cross-link involves residue K277. The segment covering Q287–S297 has biased composition (pro residues). The residue at position 297 (S297) is a Phosphoserine. The segment at T330 to L378 adopts a CXXC-type 3 zinc-finger fold. Residues C338, C341, C344, C350, C353, C356, C372, and C377 each contribute to the Zn(2+) site. Phosphoserine is present on residues S391 and S399. Positions S391–P451 are disordered. Residues Y403–L417 show a composition bias toward basic residues. K422 is covalently cross-linked (Glycyl lysine isopeptide (Lys-Gly) (interchain with G-Cter in SUMO2)). Residues A426–T439 show a composition bias toward polar residues. K440 participates in a covalent cross-link: Glycyl lysine isopeptide (Lys-Gly) (interchain with G-Cter in SUMO2). Residues K499 and K538 each participate in a glycyl lysine isopeptide (Lys-Gly) (interchain with G-Cter in SUMO2); alternate cross-link. Positions V520–I573 are disordered. The segment at A529–P592 is transcriptional repression domain (TRD). K558 participates in a covalent cross-link: Glycyl lysine isopeptide (Lys-Gly) (interchain with G-Cter in SUMO2).

Interacts with OASL, ATF7IP, ATF7IP2 and BAHD1. Binds CHAF1A and the SUV39H1-CBX5 complex via the MBD domain. Binds MGP via the TRD domain. May be part of the MeCP1 complex. Sumoylated, sumoylation may increase interaction with ATF7IP. In terms of tissue distribution, widely expressed.

It localises to the nucleus. The protein localises to the nucleus matrix. It is found in the nucleus speckle. Its subcellular location is the chromosome. In terms of biological role, transcriptional repressor that binds CpG islands in promoters where the DNA is methylated at position 5 of cytosine within CpG dinucleotides. Binding is abolished by the presence of 7-mG that is produced by DNA damage by methylmethanesulfonate (MMS). Acts as transcriptional repressor and plays a role in gene silencing by recruiting ATF7IP, which in turn recruits factors such as the histone methyltransferase SETDB1. Probably forms a complex with SETDB1 and ATF7IP that represses transcription and couples DNA methylation and histone 'Lys-9' trimethylation. Isoform 1 and isoform 2 can also repress transcription from unmethylated promoters. The sequence is that of Methyl-CpG-binding domain protein 1 from Homo sapiens (Human).